A 402-amino-acid chain; its full sequence is Fugralins biosynthesis cluster protein 2 (402 aa).

The next 5 helical transmembrane spans lie at 28–48 (NCLAYTVLILCAVITTICFLL), 109–129 (ILIFGVCYSFVLPFLKIAILV), 145–165 (IFWWGCMVIGFVQATSNTAIV), 232–252 (VIFGLGLLACVSAAVRLAVTV), and 264–284 (LAPLVFWATAEMTCGFFIVCV). Disordered stretches follow at residues 312 to 335 (NPNTADRYAKSGTKGSQLSSTGPK) and 378 to 402 (TQDNRSTSDSEGHAAFPASQKPWGV). Over residues 324-334 (TKGSQLSSTGP) the composition is skewed to polar residues. The N-linked (GlcNAc...) asparagine glycan is linked to N381.

This sequence belongs to the SAT4 family.

It localises to the membrane. It participates in secondary metabolite biosynthesis. Its function is as follows. Part of the gene cluster that mediates the biosynthesis of the tetraketides fugralins such as linear fugralin A and cyclic fugralin B, volatile compounds that play a role in the asexual reproductive cycle but are not involved in pathogenicity. One of the key features of fugralins is the presence of a double methyl group, which is only rarely encountered in fungal secondary metabolites. As the fugralins cluster does not contain an independent methyltransferase, the PKS FGR1 is probably responsible for adding two methyl groups to the same carbon atom. Fugralin B is similar to fugralin A except for a cyclization between the carboxylic acid C-8 and the alcohol on C-4 resulting in a six membered lactone ring, probably catalyzed by the cyclase FGR4. The exact role of the individual cluster genes remains unknown and further work is needed to unravel the biosynthetic pathway. The protein is Fugralins biosynthesis cluster protein 2 of Gibberella zeae (strain ATCC MYA-4620 / CBS 123657 / FGSC 9075 / NRRL 31084 / PH-1) (Wheat head blight fungus).